The following is an 892-amino-acid chain: MTDVTVKSLAAEIQTPVDRLVQQFADAGIKKSDVDSVTQQEKEILLAHLNREHGSVPNKLTLQRKTRSTLNIPSTGGKSKSVQIEVRKKRTYVNTPEAEQAKAEEQAQREAEEQAQREAEATAQKIAEEKAKREAEEQAKREAAEKAKRQAAEKEKVTNQQTDEKTKPAQTDKARREAEAAELKRSVEEETRRKVEEDAKRVAEEARKMAAENEGKWPEPVAEQTESADYHVTTSQHARAAEDENDAKVEGDRRSRTRGGKATKQKKGNKLSESKADREEARAVGRKGKRKPSTLQQSFNKPVVAVNRDVVIGETVTVAELANKMAVKGSQVIKAMMKLGAMATINQVIDQETAQLVAEEMGHKVILRRENELEEALMSDRDIGVEAAAEHRAPVVTIMGHVDHGKTSLLDYIRSTKVASGEAGGITQHIGAYHVETENGMITFLDTPGHAAFTSMRARGAQATDIVVLVVAADDGVMPQTIEAIQHAKAANVPVVVAVNKIDKPEADPDRVKTELSQYGIQPEEWGGESQFINVSAKAGIGIDELLNAILLQAEVLELKAVRTGMANGVVIESFLDKGRGPVATVLVQQGTLNKGDIVLCGFEYGRVRAMRDELGRDITSAGPSIPVEILGLSSVPAAGDEVTVVRDEKKAREVALYRQGKFREVKLARQQKSKLENMFANMTEGEVSELNIVIKSDVQGSCEAICDSLEKLSTDEVKVRIVGSGVGGITETDATLAAASGAIILGFNVRADASARRVVETEGLDLRYYSVIYSLIDEVKQAMSGMLAPEYKQQIIGLAEVRDVFKSPKFGAIAGCMVTEGVIKRNNPIRVLRDNVVIYEGELESLRRFKDDVSEVRNGMECGIGVKNYNDVRTGDVIEVFEIIEIKRTIA.

The segment at 65–296 (KTRSTLNIPS…KGKRKPSTLQ (232 aa)) is disordered. Over residues 68–82 (STLNIPSTGGKSKSV) the composition is skewed to polar residues. Residues 99–217 (EQAKAEEQAQ…KMAAENEGKW (119 aa)) show a composition bias toward basic and acidic residues. Positions 224–237 (QTESADYHVTTSQH) are enriched in polar residues. Over residues 239-254 (RAAEDENDAKVEGDRR) the composition is skewed to basic and acidic residues. Positions 255–269 (SRTRGGKATKQKKGN) are enriched in basic residues. Positions 270 to 283 (KLSESKADREEARA) are enriched in basic and acidic residues. One can recognise a tr-type G domain in the interval 391–560 (HRAPVVTIMG…LLQAEVLELK (170 aa)). The segment at 400-407 (GHVDHGKT) is G1. Residue 400–407 (GHVDHGKT) coordinates GTP. Residues 425-429 (GITQH) form a G2 region. The G3 stretch occupies residues 446–449 (DTPG). Residues 446-450 (DTPGH) and 500-503 (NKID) contribute to the GTP site. The tract at residues 500 to 503 (NKID) is G4. The interval 536-538 (SAK) is G5.

This sequence belongs to the TRAFAC class translation factor GTPase superfamily. Classic translation factor GTPase family. IF-2 subfamily.

It localises to the cytoplasm. Functionally, one of the essential components for the initiation of protein synthesis. Protects formylmethionyl-tRNA from spontaneous hydrolysis and promotes its binding to the 30S ribosomal subunits. Also involved in the hydrolysis of GTP during the formation of the 70S ribosomal complex. The sequence is that of Translation initiation factor IF-2 from Yersinia pseudotuberculosis serotype O:1b (strain IP 31758).